Here is a 450-residue protein sequence, read N- to C-terminus: Phosphoglucosamine mutase (450 aa).

Residue Ser102 is the Phosphoserine intermediate of the active site. 4 residues coordinate Mg(2+): Ser102, Asp242, Asp244, and Asp246. Ser102 is modified (phosphoserine).

The protein belongs to the phosphohexose mutase family. The cofactor is Mg(2+). Post-translationally, activated by phosphorylation.

It carries out the reaction alpha-D-glucosamine 1-phosphate = D-glucosamine 6-phosphate. Catalyzes the conversion of glucosamine-6-phosphate to glucosamine-1-phosphate. This chain is Phosphoglucosamine mutase, found in Staphylococcus haemolyticus (strain JCSC1435).